A 91-amino-acid chain; its full sequence is Small ribosomal subunit protein uS19 (91 aa).

Belongs to the universal ribosomal protein uS19 family.

Protein S19 forms a complex with S13 that binds strongly to the 16S ribosomal RNA. This chain is Small ribosomal subunit protein uS19, found in Syntrophotalea carbinolica (strain DSM 2380 / NBRC 103641 / GraBd1) (Pelobacter carbinolicus).